The chain runs to 484 residues: Putative sodium/proton-dependent alanine carrier protein YrbD (484 aa).

11 helical membrane-spanning segments follow: residues valine 11–methionine 31, alanine 66–proline 88, phenylalanine 92–isoleucine 114, tryptophan 139–valine 159, phenylalanine 172–phenylalanine 192, isoleucine 205–valine 225, serine 238–valine 258, alanine 292–phenylalanine 312, glycine 350–alanine 370, tryptophan 390–threonine 410, and alanine 416–leucine 436.

The protein belongs to the alanine or glycine:cation symporter (AGCS) (TC 2.A.25) family.

Its subcellular location is the cell membrane. This Bacillus subtilis (strain 168) protein is Putative sodium/proton-dependent alanine carrier protein YrbD (yrbD).